We begin with the raw amino-acid sequence, 253 residues long: Redox-sensing transcriptional repressor Rex (253 aa).

Positions 26-65 form a DNA-binding region, H-T-H motif; the sequence is LYLRALTALSERSVPTVSSEELATAAGVNSAKLRKDFSYL. 100–105 contributes to the NAD(+) binding site; the sequence is GIGNLG. Positions 217 to 253 are disordered; the sequence is RKAGEDSAAEDEGAPPMRATPASRKGPDGDMPAVMPA.

This sequence belongs to the transcriptional regulatory Rex family. As to quaternary structure, homodimer.

It localises to the cytoplasm. Functionally, modulates transcription in response to changes in cellular NADH/NAD(+) redox state. The chain is Redox-sensing transcriptional repressor Rex from Streptomyces griseus subsp. griseus (strain JCM 4626 / CBS 651.72 / NBRC 13350 / KCC S-0626 / ISP 5235).